A 559-amino-acid polypeptide reads, in one-letter code: Dihydroxy-acid dehydratase (559 aa).

Cysteine 49 lines the [2Fe-2S] cluster pocket. Residue aspartate 81 coordinates Mg(2+). Residue cysteine 122 participates in [2Fe-2S] cluster binding. Mg(2+) contacts are provided by aspartate 123 and lysine 124. The residue at position 124 (lysine 124) is an N6-carboxylysine. A [2Fe-2S] cluster-binding site is contributed by cysteine 194. Glutamate 446 provides a ligand contact to Mg(2+). The Proton acceptor role is filled by serine 472.

This sequence belongs to the IlvD/Edd family. As to quaternary structure, homodimer. Requires [2Fe-2S] cluster as cofactor. Mg(2+) is required as a cofactor.

The enzyme catalyses (2R)-2,3-dihydroxy-3-methylbutanoate = 3-methyl-2-oxobutanoate + H2O. The catalysed reaction is (2R,3R)-2,3-dihydroxy-3-methylpentanoate = (S)-3-methyl-2-oxopentanoate + H2O. It functions in the pathway amino-acid biosynthesis; L-isoleucine biosynthesis; L-isoleucine from 2-oxobutanoate: step 3/4. The protein operates within amino-acid biosynthesis; L-valine biosynthesis; L-valine from pyruvate: step 3/4. In terms of biological role, functions in the biosynthesis of branched-chain amino acids. Catalyzes the dehydration of (2R,3R)-2,3-dihydroxy-3-methylpentanoate (2,3-dihydroxy-3-methylvalerate) into 2-oxo-3-methylpentanoate (2-oxo-3-methylvalerate) and of (2R)-2,3-dihydroxy-3-methylbutanoate (2,3-dihydroxyisovalerate) into 2-oxo-3-methylbutanoate (2-oxoisovalerate), the penultimate precursor to L-isoleucine and L-valine, respectively. The chain is Dihydroxy-acid dehydratase from Prochlorococcus marinus subsp. pastoris (strain CCMP1986 / NIES-2087 / MED4).